The primary structure comprises 83 residues: uncharacterized protein (83 aa).

A run of 2 helical transmembrane segments spans residues 23–43 (FSLW…QLIK) and 56–76 (TIFV…CVFL).

It localises to the cell membrane. This is an uncharacterized protein from Bacillus subtilis (strain 168).